The sequence spans 581 residues: MYSLPGATMSAAPASIISSSSFVEPLLLAAASPAAAAAAANSHHQVRQRGHLVRTLAASSSSNTLLRSDFDLQEGLTTDVKRMLRQRQKKSGGGREMLVTIDNLKRLCIDHYFEEEIEGAMATGACTRLLHSDDLFDATLAFRLLREAGHDVSAKDDVLRRFIDGASGDFKLSLSNDVRGLLSLHDMSHLDVGGEAALLHRAKEFSSRHLASAVRYLDDPSLAEYVRQSLDHPYHLSLTQYKARHHLRYLQSLPSRDAAVERLAVAEFQLNKSLHQGEMREIKRWWMDLGLAEEIPVVRDQVMKWYMWSMAALQGSSFSRYRVEITKIISLVYVVDDIFDLVGTLEELSAFTEAVKMWDTVAADSLPSCMRSCYKALHTVTNEIAEIAQKEHGSNHVNRLRKAWAVLFDGFMVEARWLATDQVPTAEDYLRNGVITSGVPLTFMHIFSMLGYDDPSTEEEEEAIIDHMPSIISCPAKILRLWDDMGSAEDEAQEGFDGSYRDFYLMENPSRSPGEAEAHMRGLIAREWEVLNRECFCRRTFPSNLVQVCLNTARMVSVMYSYNKEQRLPVLEDYAAMMLVL.

Residues 1-34 (MYSLPGATMSAAPASIISSSSFVEPLLLAAASPA) constitute a chloroplast transit peptide. Residues Arg299, Asp336, Asp340, and Arg480 each coordinate substrate. Mg(2+) is bound by residues Asp336 and Asp340. The short motif at 336 to 340 (DDIFD) is the DDXXD motif element. Mg(2+) is bound by residues Asp483, Ser487, and Glu491.

The protein belongs to the terpene synthase family. As to quaternary structure, monomer. The cofactor is Mg(2+).

It is found in the plastid. The protein resides in the chloroplast. The enzyme catalyses (2E,6E)-farnesyl diphosphate + H2O = (3S,6E)-nerolidol + diphosphate. It catalyses the reaction (2E,6E,10E)-geranylgeranyl diphosphate + H2O = (6E,10E)-geranyllinalool + diphosphate. It carries out the reaction (2E)-geranyl diphosphate + H2O = (S)-linalool + diphosphate. The protein operates within secondary metabolite biosynthesis; terpenoid biosynthesis. Its function is as follows. Involved in sesquiterpene (C15), diterpene (C20) and monoterpene (C10) biosynthesis. Has sesquiterpene synthase activity, converting farnesyl diphosphate to nerolidol, the precursor of the volatile C11-homoterpene (E)-3,8-dimethyl-1,4,7-nonatriene (DMNT). Has diterpene synthase activity, converting geranylgeranyl diphosphate to (E,E)-geranyllinalool, the precursor of the volatile C16-homoterpene (E,E)-4,8,12-trimethyltrideca 1,3,7,11-tetraene (TMTT). Has monoterpene synthase activity, converting geranyl diphosphate into linalool. Forms only the S-isomers of the three tertiary terpene alcohols. In Zea mays (Maize), this protein is Terpene synthase 2, chloroplastic.